The sequence spans 444 residues: MKKEKKYFGTDGIRDQVGKGLICPDKILKLGWATGKVIKDHGESVVMIGKDTRISGYMFESALEAGFIAAGVDVMLLGPMPTPAVAYLTQTFHADAGIVISASHNPHHDNGIKFFSAKGQKISDAIEHEIEAAYEQDLSIVSSSDLGRAKRIDDAAGRYIEFCKSTYEGAKKLDGFKIVLDCAQGATYHIAPMVFKELGAEVVAIGVEPDGININQNCGATDLAQLQARVVAEKADFGIAFDGDGDRVMMVDAQGDVVDGDEILYILATGTNLPIKGVAGTLMSNLGLENALKEKGIELVRTQVGDRYVMEALREKGWVLGAESSGHVLCLNKTTTGDGIVAALQVVSIMVNSGKTLTELRQGMTKYPQILQNVRVESKVGLNTNAALKKAVQDSEERMGGKGRVLIRASGTEPLIRVMVEGDSRSMIESEVKSLVELVKTEFC.

Catalysis depends on Ser103, which acts as the Phosphoserine intermediate. Mg(2+) is bound by residues Ser103, Asp242, Asp244, and Asp246. Ser103 carries the phosphoserine modification.

This sequence belongs to the phosphohexose mutase family. Mg(2+) serves as cofactor. In terms of processing, activated by phosphorylation.

It catalyses the reaction alpha-D-glucosamine 1-phosphate = D-glucosamine 6-phosphate. Catalyzes the conversion of glucosamine-6-phosphate to glucosamine-1-phosphate. The chain is Phosphoglucosamine mutase from Hydrogenovibrio crunogenus (strain DSM 25203 / XCL-2) (Thiomicrospira crunogena).